The primary structure comprises 215 residues: Pyrophosphatase PpaX (215 aa).

The Nucleophile role is filled by aspartate 9.

It belongs to the HAD-like hydrolase superfamily. PpaX family. Mg(2+) serves as cofactor.

The catalysed reaction is diphosphate + H2O = 2 phosphate + H(+). Functionally, hydrolyzes pyrophosphate formed during P-Ser-HPr dephosphorylation by HPrK/P. Might play a role in controlling the intracellular pyrophosphate pool. This Anoxybacillus flavithermus (strain DSM 21510 / WK1) protein is Pyrophosphatase PpaX.